A 461-amino-acid polypeptide reads, in one-letter code: UDP-N-acetylmuramate--L-alanine ligase (461 aa).

Position 112–118 (112–118 (GTHGKTT)) interacts with ATP.

The protein belongs to the MurCDEF family.

It localises to the cytoplasm. The enzyme catalyses UDP-N-acetyl-alpha-D-muramate + L-alanine + ATP = UDP-N-acetyl-alpha-D-muramoyl-L-alanine + ADP + phosphate + H(+). Its pathway is cell wall biogenesis; peptidoglycan biosynthesis. Its function is as follows. Cell wall formation. This is UDP-N-acetylmuramate--L-alanine ligase from Hydrogenovibrio crunogenus (strain DSM 25203 / XCL-2) (Thiomicrospira crunogena).